The primary structure comprises 95 residues: Small ribosomal subunit protein uS19 (95 aa).

It belongs to the universal ribosomal protein uS19 family.

Functionally, protein S19 forms a complex with S13 that binds strongly to the 16S ribosomal RNA. This Coxiella burnetii (strain CbuK_Q154) (Coxiella burnetii (strain Q154)) protein is Small ribosomal subunit protein uS19.